The primary structure comprises 556 residues: Dihydroxy-acid dehydratase (556 aa).

C47 is a binding site for [2Fe-2S] cluster. D79 provides a ligand contact to Mg(2+). C120 lines the [2Fe-2S] cluster pocket. Residues D121 and K122 each coordinate Mg(2+). K122 bears the N6-carboxylysine mark. C192 contacts [2Fe-2S] cluster. A Mg(2+)-binding site is contributed by E444. S470 (proton acceptor) is an active-site residue.

The protein belongs to the IlvD/Edd family. In terms of assembly, homodimer. [2Fe-2S] cluster serves as cofactor. Mg(2+) is required as a cofactor.

The catalysed reaction is (2R)-2,3-dihydroxy-3-methylbutanoate = 3-methyl-2-oxobutanoate + H2O. It catalyses the reaction (2R,3R)-2,3-dihydroxy-3-methylpentanoate = (S)-3-methyl-2-oxopentanoate + H2O. The protein operates within amino-acid biosynthesis; L-isoleucine biosynthesis; L-isoleucine from 2-oxobutanoate: step 3/4. It functions in the pathway amino-acid biosynthesis; L-valine biosynthesis; L-valine from pyruvate: step 3/4. In terms of biological role, functions in the biosynthesis of branched-chain amino acids. Catalyzes the dehydration of (2R,3R)-2,3-dihydroxy-3-methylpentanoate (2,3-dihydroxy-3-methylvalerate) into 2-oxo-3-methylpentanoate (2-oxo-3-methylvalerate) and of (2R)-2,3-dihydroxy-3-methylbutanoate (2,3-dihydroxyisovalerate) into 2-oxo-3-methylbutanoate (2-oxoisovalerate), the penultimate precursor to L-isoleucine and L-valine, respectively. The chain is Dihydroxy-acid dehydratase from Prochlorococcus marinus (strain NATL2A).